A 542-amino-acid chain; its full sequence is Chaperonin GroEL 2 (542 aa).

ATP-binding positions include 29–32 (TLGP), 86–90 (DGTTT), Gly413, 477–479 (NAA), and Asp493.

Belongs to the chaperonin (HSP60) family. As to quaternary structure, forms a cylinder of 14 subunits composed of two heptameric rings stacked back-to-back. Interacts with the co-chaperonin GroES.

The protein resides in the cytoplasm. It catalyses the reaction ATP + H2O + a folded polypeptide = ADP + phosphate + an unfolded polypeptide.. Functionally, together with its co-chaperonin GroES, plays an essential role in assisting protein folding. The GroEL-GroES system forms a nano-cage that allows encapsulation of the non-native substrate proteins and provides a physical environment optimized to promote and accelerate protein folding. The sequence is that of Chaperonin GroEL 2 from Kineococcus radiotolerans (strain ATCC BAA-149 / DSM 14245 / SRS30216).